A 189-amino-acid chain; its full sequence is Tetratricopeptide repeat protein 36 (189 aa).

TPR repeat units follow at residues 51-84, 86-118, and 123-156; these read SKALELQGVMAAEAGDLSTALERFGQAICLLPER, SAYNNRAQARRLQGDVAGALEDLERAVELSGGR, and RQSFVQRGLLARLQGRDDDARRDFERAARLGSPF.

This sequence belongs to the TTC36 family.

This is Tetratricopeptide repeat protein 36 (TTC36) from Homo sapiens (Human).